Here is a 274-residue protein sequence, read N- to C-terminus: NH(3)-dependent NAD(+) synthetase (274 aa).

Residue 46–53 participates in ATP binding; that stretch reads GISGGQDS. Residue aspartate 52 coordinates Mg(2+). Residue arginine 140 participates in deamido-NAD(+) binding. Threonine 160 contacts ATP. Residue glutamate 165 participates in Mg(2+) binding. Positions 173 and 180 each coordinate deamido-NAD(+). ATP-binding residues include lysine 189 and threonine 211. 260 to 261 is a deamido-NAD(+) binding site; that stretch reads HK.

It belongs to the NAD synthetase family. Homodimer.

It catalyses the reaction deamido-NAD(+) + NH4(+) + ATP = AMP + diphosphate + NAD(+) + H(+). It participates in cofactor biosynthesis; NAD(+) biosynthesis; NAD(+) from deamido-NAD(+) (ammonia route): step 1/1. Its function is as follows. Catalyzes the ATP-dependent amidation of deamido-NAD to form NAD. Uses ammonia as a nitrogen source. The sequence is that of NH(3)-dependent NAD(+) synthetase from Streptococcus pneumoniae (strain 70585).